A 469-amino-acid chain; its full sequence is D-3-phosphoglycerate dehydrogenase 2 (469 aa).

Ser2 bears the N-acetylserine mark. Phosphoserine occurs at positions 22, 29, and 33. NAD(+) contacts are provided by residues His208–Ile209, Asp228, Ala285–Arg287, and Asp311. Arg287 is an active-site residue. Residue Glu316 is part of the active site. His347 acts as the Proton donor in catalysis. Residue His347–Gly350 coordinates NAD(+). The ACT domain occupies Arg399–Tyr469.

This sequence belongs to the D-isomer specific 2-hydroxyacid dehydrogenase family.

It catalyses the reaction (2R)-3-phosphoglycerate + NAD(+) = 3-phosphooxypyruvate + NADH + H(+). The enzyme catalyses (R)-2-hydroxyglutarate + NAD(+) = 2-oxoglutarate + NADH + H(+). It functions in the pathway amino-acid biosynthesis; L-serine biosynthesis; L-serine from 3-phospho-D-glycerate: step 1/3. Catalyzes the reversible oxidation of 3-phospho-D-glycerate to 3-phosphonooxypyruvate, the first step of the phosphorylated L-serine biosynthesis pathway. Also catalyzes the reversible oxidation of 2-hydroxyglutarate to 2-oxoglutarate. This Saccharomyces cerevisiae (strain ATCC 204508 / S288c) (Baker's yeast) protein is D-3-phosphoglycerate dehydrogenase 2 (SER33).